Here is a 444-residue protein sequence, read N- to C-terminus: NAD(+)--protein-arginine ADP-ribosyltransferase Tre1 (444 aa).

The segment at 72 to 140 (PRHVTGVLAD…NDLLACSAEI (69 aa)) is PAAR domain. The 179-residue stretch at 266 to 444 (MTLAEAVGQE…TTHLLYREIP (179 aa)) folds into the TR mART core domain. Residues 274 to 444 (QEQAKVWTQT…TTHLLYREIP (171 aa)) form an ART domain region. Active-site residues include Arg-356, Ser-381, and Glu-415.

It belongs to the Arg-specific ADP-ribosyltransferase family. Forms a stable complex with cognate immunity protein Tri1-Sp.

The protein resides in the secreted. It localises to the host cytoplasm. It carries out the reaction L-arginyl-[protein] + NAD(+) = N(omega)-(ADP-D-ribosyl)-L-arginyl-[protein] + nicotinamide + H(+). Toxic component of a contact-dependent interbacterial competition system (also called effector-immunity systems). Acts by ADP-ribosylating a number of target proteins in target cells; E.coli target proteins include FtsZ, EFTu, RNase E, Fis, RL9, SucB, and LolD. FtsZ is thought to be the physiologically relevant target as it is ADP-ribosylated on a critical residue. ADP-ribosylation of FtsZ prevents formation of the FtsZ mid-cell ring and inhibits cell division. Overexpression of the whole Tre1 protein or the ART domain in E.coli is toxic; cells elongate dramatically and some undergo lysis. Toxic activity is neutralized by coexpression of the cognate immunity protein Tri1-Sp; Tri1-Sp neutralizes this protein both by binding to and occluding the active site (via Tri1's N-terminal extension) and by hydrolysis of the ADP-ribosyl moiety from the target protein. Tre1 can also be neutralized by non-cognate immunity protein Tri1-Pp from P.putida strain GB-1, with which it does not form a stable complex; DraG of R.palustris does not neutralize the toxic effects of this protein. In interbacterial competition studies Tri1 from P.putida strain B6-2 also neutralizes this protein. This is NAD(+)--protein-arginine ADP-ribosyltransferase Tre1 from Serratia proteamaculans (strain 568).